Consider the following 302-residue polypeptide: MTIVSPDKLPSARAVELTAPLDDIYQILNEDGAVIIKNFIPLELVDKINKEVDPYLAQHAAGPNHMSEIYKLTVGSKTKHMGNLTMASKSFRDEVLNHPSMHAISEKLFRANFGDYWLNRAAVLEVDSGEKAQGLHRDDSLYPWKAFLTKDSPELMVNFFIALTEFREENGATRLVLGSHKWEDSTRYPSPEQTIPAEMQAGDAIVYLASLFHGAGQNRSQKTRRGLSITTHPAHFTPMESHIDVPRAIIENMTPLAQKMIGWRTWSTNHGVPVWTVRDGRMEDELKLKSLESPKQIQAAVI.

His136, Asp138, and His213 together coordinate Fe cation.

The protein belongs to the PhyH family. Homodimer. The cofactor is Fe cation.

It is found in the peroxisome matrix. Its pathway is secondary metabolite biosynthesis; terpenoid biosynthesis. Dioxygenase; part of the gene cluster that mediates the biosynthesis of 15-deoxyoxalicine B. The first step of the pathway is the synthesis of nicotinyl-CoA from nicotinic acid by the nicotinic acid-CoA ligase olcI. Nicotinyl-CoA is then a substrate of polyketide synthase olcA to produce 4-hydroxy-6-(3-pyridinyl)-2H-pyran-2-one (HPPO) which is further prenylated by the polyprenyl transferase olcH to yield geranylgeranyl-HPPO. Geranylgeranyl pyrophosphate is provided by the cluster-specific geranylgeranyl pyrophosphate synthase olcC. The FAD-dependent monooxygenase olcE catalyzes the epoxidation of geranylgeranyl-HPPO and the terpene cyclase olcD catalyzes the cyclization of the terpenoid component, resulting in the formation of the tricyclic terpene moiety seen in predecaturin E. The cytochrome P450 monooxygenase then catalyzes the allylic oxidation of predecaturin E, which is followed by spirocylization with concomitant loss of one molecule of water to form decaturin E. Decaturin E is the substrate of the cytochrome P450 monooxygenase olcJ which hydroxylates it at the C-29 position to form decaturin F. The short-chain dehydrogenase/reductase olcF may catalyze the oxidation of decaturin F to generate the 29-hydroxyl-27-one intermediate, and subsequent hemiacetal formation probably leads to the formation of decaturin C. The dioxygenase olcK may be a peroxisomal enzyme that catalyzes the hydroxylation of decaturin C into decaturin A once decaturin C is shuttled into the peroxisome by the MFS transporter olcL. Finally the cytochrome P450 monooxygenase olcB catalyzes the oxidative rearrangement to yield 15-deoxyoxalicine B. In the absence of olcJ, decaturin E may be shunted to a pathway in which it is oxidized to a ketone, possibly by olcF, to form decaturin D, which undergoes further allylic oxidation to yield decaturin G. Moreover, in the absence of oclK or oclL, oclB can convert decaturin C into 15-deoxyoxalicine A. This chain is Dioxygenase olcK, found in Penicillium canescens.